A 511-amino-acid polypeptide reads, in one-letter code: 2-isopropylmalate synthase (511 aa).

One can recognise a Pyruvate carboxyltransferase domain in the interval 6 to 269 (IIIFDTTLRD…YTDIKCENIF (264 aa)). Mn(2+) contacts are provided by D15, H203, H205, and N239. Residues 394-511 (VIEKLSVISG…SLKVEERKMA (118 aa)) are regulatory domain.

It belongs to the alpha-IPM synthase/homocitrate synthase family. LeuA type 1 subfamily. Homodimer. The cofactor is Mn(2+).

Its subcellular location is the cytoplasm. The enzyme catalyses 3-methyl-2-oxobutanoate + acetyl-CoA + H2O = (2S)-2-isopropylmalate + CoA + H(+). It functions in the pathway amino-acid biosynthesis; L-leucine biosynthesis; L-leucine from 3-methyl-2-oxobutanoate: step 1/4. Functionally, catalyzes the condensation of the acetyl group of acetyl-CoA with 3-methyl-2-oxobutanoate (2-ketoisovalerate) to form 3-carboxy-3-hydroxy-4-methylpentanoate (2-isopropylmalate). This Campylobacter jejuni (strain RM1221) protein is 2-isopropylmalate synthase.